Here is a 434-residue protein sequence, read N- to C-terminus: ATP-dependent protease ATPase subunit HslU (434 aa).

Residues Val-18, Gly-60–Glu-65, Asp-247, Glu-312, and Arg-384 each bind ATP.

This sequence belongs to the ClpX chaperone family. HslU subfamily. A double ring-shaped homohexamer of HslV is capped on each side by a ring-shaped HslU homohexamer. The assembly of the HslU/HslV complex is dependent on binding of ATP.

It localises to the cytoplasm. Its function is as follows. ATPase subunit of a proteasome-like degradation complex; this subunit has chaperone activity. The binding of ATP and its subsequent hydrolysis by HslU are essential for unfolding of protein substrates subsequently hydrolyzed by HslV. HslU recognizes the N-terminal part of its protein substrates and unfolds these before they are guided to HslV for hydrolysis. This chain is ATP-dependent protease ATPase subunit HslU, found in Bradyrhizobium diazoefficiens (strain JCM 10833 / BCRC 13528 / IAM 13628 / NBRC 14792 / USDA 110).